Reading from the N-terminus, the 362-residue chain is Chorismate synthase (362 aa).

R47 serves as a coordination point for NADP(+). FMN-binding positions include 124–126 (RSS), G286, 301–305 (KPTAT), and R327.

The protein belongs to the chorismate synthase family. In terms of assembly, homotetramer. The cofactor is FMNH2.

The catalysed reaction is 5-O-(1-carboxyvinyl)-3-phosphoshikimate = chorismate + phosphate. It participates in metabolic intermediate biosynthesis; chorismate biosynthesis; chorismate from D-erythrose 4-phosphate and phosphoenolpyruvate: step 7/7. Catalyzes the anti-1,4-elimination of the C-3 phosphate and the C-6 proR hydrogen from 5-enolpyruvylshikimate-3-phosphate (EPSP) to yield chorismate, which is the branch point compound that serves as the starting substrate for the three terminal pathways of aromatic amino acid biosynthesis. This reaction introduces a second double bond into the aromatic ring system. This Trichormus variabilis (strain ATCC 29413 / PCC 7937) (Anabaena variabilis) protein is Chorismate synthase.